Consider the following 395-residue polypeptide: Accessory Sec system protein translocase subunit SecY2 (395 aa).

Helical transmembrane passes span 13 to 33 (VSFSLFIVIIYVMGLYIPLPF), 63 to 83 (ISIFSIGLNPLMFSMLIIQLL), 102 to 122 (LMQFLTMIITIIQAALLVFAF), 128 to 148 (GLEDFEMILILSAGSCLVVWL), 157 to 177 (VGASAPVILTSILNGAIPNII), 190 to 210 (WIWLAALAIFILLLIKFWLAF), 239 to 259 (MAAMMMYMVGMAILTLPLMVG), 272 to 292 (VFQASFSAVMGILIFYFFTFV), 326 to 346 (LIWIIAFPGAVLNAFQLVFGL), and 355 to 375 (YAGFAIIPMNVVMITMFMGGI).

It belongs to the SecY/SEC61-alpha family. SecY2 subfamily. Component of the accessory SecA2/SecY2 protein translocase complex required to export cell wall proteins. May form heterotrimers with SecE and SecG subunits.

It is found in the cell membrane. Functionally, part of the accessory SecA2/SecY2 system specifically required for export of possible cell wall proteins. The central subunit of a protein translocation channel. The protein is Accessory Sec system protein translocase subunit SecY2 of Lactobacillus johnsonii (strain CNCM I-12250 / La1 / NCC 533).